The following is a 331-amino-acid chain: Glutamyl-tRNA reductase (331 aa).

Substrate-binding positions include 49–52 (TCNR), Ser107, 112–114 (EDQ), and Gln118. Cys50 functions as the Nucleophile in the catalytic mechanism. 184 to 189 (GNGEIG) lines the NADP(+) pocket.

This sequence belongs to the glutamyl-tRNA reductase family. In terms of assembly, homodimer.

It catalyses the reaction (S)-4-amino-5-oxopentanoate + tRNA(Glu) + NADP(+) = L-glutamyl-tRNA(Glu) + NADPH + H(+). It participates in porphyrin-containing compound metabolism; protoporphyrin-IX biosynthesis; 5-aminolevulinate from L-glutamyl-tRNA(Glu): step 1/2. Its function is as follows. Catalyzes the NADPH-dependent reduction of glutamyl-tRNA(Glu) to glutamate 1-semialdehyde (GSA). This Acetivibrio thermocellus (strain ATCC 27405 / DSM 1237 / JCM 9322 / NBRC 103400 / NCIMB 10682 / NRRL B-4536 / VPI 7372) (Clostridium thermocellum) protein is Glutamyl-tRNA reductase.